The following is a 238-amino-acid chain: Probable septum site-determining protein MinC (238 aa).

The protein belongs to the MinC family. As to quaternary structure, interacts with MinD and FtsZ.

In terms of biological role, cell division inhibitor that blocks the formation of polar Z ring septums. Rapidly oscillates between the poles of the cell to destabilize FtsZ filaments that have formed before they mature into polar Z rings. Prevents FtsZ polymerization. The polypeptide is Probable septum site-determining protein MinC (Blochmanniella floridana).